We begin with the raw amino-acid sequence, 202 residues long: Orotate phosphoribosyltransferase (202 aa).

Residues Lys-93 and 113-121 (EDIITTGGS) contribute to the 5-phospho-alpha-D-ribose 1-diphosphate site. Thr-117 and Arg-145 together coordinate orotate.

It belongs to the purine/pyrimidine phosphoribosyltransferase family. PyrE subfamily. In terms of assembly, homodimer. Mg(2+) serves as cofactor.

It carries out the reaction orotidine 5'-phosphate + diphosphate = orotate + 5-phospho-alpha-D-ribose 1-diphosphate. Its pathway is pyrimidine metabolism; UMP biosynthesis via de novo pathway; UMP from orotate: step 1/2. In terms of biological role, catalyzes the transfer of a ribosyl phosphate group from 5-phosphoribose 1-diphosphate to orotate, leading to the formation of orotidine monophosphate (OMP). In Campylobacter jejuni subsp. doylei (strain ATCC BAA-1458 / RM4099 / 269.97), this protein is Orotate phosphoribosyltransferase.